The chain runs to 384 residues: Tetraacyldisaccharide 4'-kinase (384 aa).

72–79 (TAGGTGKT) contributes to the ATP binding site.

Belongs to the LpxK family.

It carries out the reaction a lipid A disaccharide + ATP = a lipid IVA + ADP + H(+). It functions in the pathway glycolipid biosynthesis; lipid IV(A) biosynthesis; lipid IV(A) from (3R)-3-hydroxytetradecanoyl-[acyl-carrier-protein] and UDP-N-acetyl-alpha-D-glucosamine: step 6/6. Functionally, transfers the gamma-phosphate of ATP to the 4'-position of a tetraacyldisaccharide 1-phosphate intermediate (termed DS-1-P) to form tetraacyldisaccharide 1,4'-bis-phosphate (lipid IVA). The chain is Tetraacyldisaccharide 4'-kinase from Halothermothrix orenii (strain H 168 / OCM 544 / DSM 9562).